A 495-amino-acid chain; its full sequence is Serine/threonine-protein phosphatase 2A regulatory subunit sur-6 (495 aa).

Positions 1–27 (MVMEVDEPAVAATTSQNQPQEHANDFD) are disordered. Residues 12–21 (ATTSQNQPQE) are compositionally biased toward polar residues. WD repeat units follow at residues 64–103 (TEADVISCVEFSHDGEYLATGDKGGRVVIFQRDQSGKYVK), 130–171 (EIDE…RKIG), 215–253 (AHTYHVNSISVNSDQETFLSADDLRVNLWNLEITNESFN), 264–304 (ELTE…LCDA), 323–361 (EIIASVSDVKFSHNGRYLLTRDYLTVKVWDLNMESQPVE), and 378–419 (ENDS…DAKT). The disordered stretch occupies residues 439–459 (SAKRKRNNLSSSGETTEEDLS). A WD 7 repeat occupies 464–495 (QFDRKILHTAWHPKDNIIALAATNNLYIFSDV).

The protein belongs to the phosphatase 2A regulatory subunit B family. As to quaternary structure, part of a complex consisting of a common heterodimeric core enzyme, composed of catalytic subunit let-92 and constant regulatory subunit paa-1, that associates with a variety of regulatory subunits which confer distinct properties to the holoenzyme. Interacts with let-92.

It is found in the cytoplasm. Probable regulatory subunit of serine/threonine phosphatase let-92. Together with let-92 and constant regulatory subunit paa-1, positively regulates centriole duplication during early embryonic cell divisions by preventing the degradation of sas-5 and kinase zyg-1. In addition, during vulva development, may play a role with phosphatase let-92 and regulatory subunit paa-1 in the induction of vulva cell precursors by positively regulating let-60/Ras-MAP kinase signaling, probably by promoting lin-45 activation. In intestinal epithelial cells, may play a role in the late secretory pathway probably by regulating the exocyst, a protein complex involved in targeting secretory vesicles to the plasma membrane. The polypeptide is Serine/threonine-protein phosphatase 2A regulatory subunit sur-6 (Caenorhabditis elegans).